The following is an 849-amino-acid chain: uncharacterized protein (849 aa).

The next 2 helical transmembrane spans lie at 587–607 (VALGEALAAVTLAVGDFLGLF) and 620–640 (AGILTLLAAFESIYSFITGDW).

Its subcellular location is the cell membrane. This is an uncharacterized protein from Methanocaldococcus jannaschii (strain ATCC 43067 / DSM 2661 / JAL-1 / JCM 10045 / NBRC 100440) (Methanococcus jannaschii).